A 241-amino-acid chain; its full sequence is Probable transcriptional regulatory protein LHK_02347 (241 aa).

It belongs to the TACO1 family.

The protein localises to the cytoplasm. In Laribacter hongkongensis (strain HLHK9), this protein is Probable transcriptional regulatory protein LHK_02347.